The chain runs to 917 residues: Hexokinase-1 (917 aa).

Residue Met-1 is modified to N-acetylmethionine. Positions 1–10 (MIAAQLLAYY) are mitochondrial-binding peptide (MBP). 2 Hexokinase domains span residues 16 to 458 (DDQV…MVTA) and 464 to 906 (AEQH…LITA). Residues Arg-30 and 84–89 (DLGGSS) each bind ATP. The hexokinase small subdomain 1 stretch occupies residues 73–207 (DGSEKGDFIA…DYDANIVAVV (135 aa)). Position 84–91 (84–91 (DLGGSSFR)) interacts with D-glucose 6-phosphate. D-glucose-binding positions include Ser-155, 172 to 173 (TK), and 208 to 209 (ND). The hexokinase large subdomain 1 stretch occupies residues 208–447 (NDTVGTMMTC…SDVRFLLSES (240 aa)). 2 residues coordinate D-glucose 6-phosphate: Asp-209 and Thr-232. D-glucose is bound by residues Asn-235, Glu-260, and 291-294 (QLFE). A Phosphoserine modification is found at Ser-337. Asn-345 contacts ATP. 413 to 415 (DGS) lines the D-glucose 6-phosphate pocket. 425–426 (RR) serves as a coordination point for ATP. D-glucose 6-phosphate contacts are provided by residues Ser-449 and 532 to 536 (DLGGT). The hexokinase small subdomain 2 stretch occupies residues 521-655 (DGTENGDFLA…EFDLDVVAVV (135 aa)). 532–537 (DLGGTN) is a binding site for ATP. D-glucose-binding positions include 603–604 (SF), 620–621 (TK), and 656–657 (ND). Residues 656–895 (NDTVGTMMTC…CNVSFLLSED (240 aa)) are hexokinase large subdomain 2. Residues Asp-657 and Thr-680 each contribute to the D-glucose 6-phosphate site. Thr-680 is an ATP binding site. D-glucose is bound by residues 682 to 683 (SN), Glu-708, and Glu-742. ATP contacts are provided by residues 747 to 748 (GM), 784 to 788 (TKFLS), and 863 to 867 (TLYKL). D-glucose 6-phosphate-binding positions include 861 to 863 (DGT) and Ser-897.

Belongs to the hexokinase family. Monomer. Interacts with RABL2/RABL2A; binds preferentially to GTP-bound RABL2. Interacts with VDAC1. The HK1-VDAC1 complex interacts with ATF2. Interacts (via N-terminal spermatogenic cell-specific region) with PFKM (via C-terminus). Interacts with SMAD5. As to expression, isoform 2: Erythrocyte specific. Isoform 3: Testis-specific. Isoform 4: Testis-specific.

It localises to the mitochondrion outer membrane. The protein resides in the cytoplasm. Its subcellular location is the cytosol. The enzyme catalyses a D-hexose + ATP = a D-hexose 6-phosphate + ADP + H(+). It catalyses the reaction D-fructose + ATP = D-fructose 6-phosphate + ADP + H(+). It carries out the reaction D-glucose + ATP = D-glucose 6-phosphate + ADP + H(+). The catalysed reaction is D-mannose + ATP = D-mannose 6-phosphate + ADP + H(+). The enzyme catalyses D-glucosamine + ATP = D-glucosamine 6-phosphate + ADP + H(+). The protein operates within carbohydrate metabolism; hexose metabolism. It participates in carbohydrate degradation; glycolysis; D-glyceraldehyde 3-phosphate and glycerone phosphate from D-glucose: step 1/4. Its activity is regulated as follows. Hexokinase is an allosteric enzyme inhibited by its product D-glucose 6-phosphate. Hexokinase activity is inhibited by N-acetyl-D-glucosamine. Its function is as follows. Catalyzes the phosphorylation of various hexoses, such as D-glucose, D-glucosamine, D-fructose, D-mannose and 2-deoxy-D-glucose, to hexose 6-phosphate (D-glucose 6-phosphate, D-glucosamine 6-phosphate, D-fructose 6-phosphate, D-mannose 6-phosphate and 2-deoxy-D-glucose 6-phosphate, respectively). Does not phosphorylate N-acetyl-D-glucosamine. Mediates the initial step of glycolysis by catalyzing phosphorylation of D-glucose to D-glucose 6-phosphate. Involved in innate immunity and inflammation by acting as a pattern recognition receptor for bacterial peptidoglycan. When released in the cytosol, N-acetyl-D-glucosamine component of bacterial peptidoglycan inhibits the hexokinase activity of HK1 and causes its dissociation from mitochondrial outer membrane, thereby activating the NLRP3 inflammasome. The chain is Hexokinase-1 from Homo sapiens (Human).